A 619-amino-acid polypeptide reads, in one-letter code: Dihydroxy-acid dehydratase (619 aa).

D81 contributes to the Mg(2+) binding site. Position 122 (C122) interacts with [2Fe-2S] cluster. Residues D123 and K124 each coordinate Mg(2+). Residue K124 is modified to N6-carboxylysine. A [2Fe-2S] cluster-binding site is contributed by C195. E494 is a Mg(2+) binding site. S520 acts as the Proton acceptor in catalysis.

This sequence belongs to the IlvD/Edd family. As to quaternary structure, homodimer. The cofactor is [2Fe-2S] cluster. Mg(2+) serves as cofactor.

The catalysed reaction is (2R)-2,3-dihydroxy-3-methylbutanoate = 3-methyl-2-oxobutanoate + H2O. The enzyme catalyses (2R,3R)-2,3-dihydroxy-3-methylpentanoate = (S)-3-methyl-2-oxopentanoate + H2O. The protein operates within amino-acid biosynthesis; L-isoleucine biosynthesis; L-isoleucine from 2-oxobutanoate: step 3/4. Its pathway is amino-acid biosynthesis; L-valine biosynthesis; L-valine from pyruvate: step 3/4. Functions in the biosynthesis of branched-chain amino acids. Catalyzes the dehydration of (2R,3R)-2,3-dihydroxy-3-methylpentanoate (2,3-dihydroxy-3-methylvalerate) into 2-oxo-3-methylpentanoate (2-oxo-3-methylvalerate) and of (2R)-2,3-dihydroxy-3-methylbutanoate (2,3-dihydroxyisovalerate) into 2-oxo-3-methylbutanoate (2-oxoisovalerate), the penultimate precursor to L-isoleucine and L-valine, respectively. This chain is Dihydroxy-acid dehydratase, found in Shewanella sp. (strain MR-7).